A 179-amino-acid chain; its full sequence is Cytochrome b6-f complex iron-sulfur subunit (179 aa).

A helical transmembrane segment spans residues 21–43 (LLTFGTVTGVALGALYPVVNYFI). Positions 61–162 (GNDIIVSEFL…ANVSDDKLVF (102 aa)) constitute a Rieske domain. Positions 108, 110, 126, and 129 each coordinate [2Fe-2S] cluster. Cys-113 and Cys-128 are joined by a disulfide.

It belongs to the Rieske iron-sulfur protein family. The 4 large subunits of the cytochrome b6-f complex are cytochrome b6, subunit IV (17 kDa polypeptide, PetD), cytochrome f and the Rieske protein, while the 4 small subunits are PetG, PetL, PetM and PetN. The complex functions as a dimer. [2Fe-2S] cluster is required as a cofactor.

It localises to the cellular thylakoid membrane. The catalysed reaction is 2 oxidized [plastocyanin] + a plastoquinol + 2 H(+)(in) = 2 reduced [plastocyanin] + a plastoquinone + 4 H(+)(out). In terms of biological role, component of the cytochrome b6-f complex, which mediates electron transfer between photosystem II (PSII) and photosystem I (PSI), cyclic electron flow around PSI, and state transitions. In Trichodesmium erythraeum (strain IMS101), this protein is Cytochrome b6-f complex iron-sulfur subunit.